A 589-amino-acid polypeptide reads, in one-letter code: Muscarinic acetylcholine receptor M3 (589 aa).

Residues 1 to 66 are Extracellular-facing; the sequence is MTLHSNSTTS…DPLGGHTIWQ (66 aa). N-linked (GlcNAc...) asparagine glycosylation is found at N6, N15, N41, N48, and N52. A helical transmembrane segment spans residues 67–90; sequence VVFIAFLTGFLALVTIIGNILVIV. Residues 91-103 are Cytoplasmic-facing; the sequence is AFKVNKQLKTVNN. The helical transmembrane segment at 104–129 threads the bilayer; it reads YFLLSLACADLIIGVISMNLFTTYII. At 130-141 the chain is on the extracellular side; the sequence is MNRWALGNLACD. C140 and C220 form a disulfide bridge. The chain crosses the membrane as a helical span at residues 142–163; sequence LWLSIDYVASNASVMNLLVISF. Over 164–183 the chain is Cytoplasmic; the sequence is DRYFSITRPLTYRAKRTTKR. The helical transmembrane segment at 184–205 threads the bilayer; sequence AGVMIGLAWVISFVLWAPAILF. At 206–228 the chain is on the extracellular side; sequence WQYFVGKRTVPPGECFIQFLSEP. The chain crosses the membrane as a helical span at residues 229–251; it reads TITFGTAIAAFYMPVTIMTILYW. Topologically, residues 252 to 490 are cytoplasmic; sequence RIYKETEKRT…SLIKEKKAAQ (239 aa). The short motif at 274 to 280 is the Basolateral sorting signal element; sequence AEAENFV. Disordered stretches follow at residues 275 to 295 and 323 to 356; these read EAENFVHPTGSSRSCSSYELQ and AEQMDQDHSSSDSWNNNDAAASLENSASSDEEDI. Positions 283–295 are enriched in polar residues; it reads TGSSRSCSSYELQ. Positions 333–344 are enriched in low complexity; the sequence is SDSWNNNDAAAS. Phosphoserine is present on S384. Residues 491–513 form a helical membrane-spanning segment; that stretch reads TLSAILLAFIITWTPYNIMVLVN. The Extracellular segment spans residues 514 to 525; the sequence is TFCDSCIPKTYW. Cysteines 516 and 519 form a disulfide. A helical membrane pass occupies residues 526–545; it reads NLGYWLCYINSTVNPVCYAL. At 546-589 the chain is on the cytoplasmic side; the sequence is CNKTFRTTFKMLLLCQCDKRKRRKQQYQQRQSVIFHKRVPEQAL.

The protein belongs to the G-protein coupled receptor 1 family. Muscarinic acetylcholine receptor subfamily. CHRM3 sub-subfamily. As to quaternary structure, homodimer; the dimers can form tetramers. Interacts with NALCN. Interacts with TMEM147. As to expression, expressed in cerebral cortex, submandibular gland, hypothalamus, pancreas, liver, and ileum.

It localises to the cell membrane. The protein resides in the postsynaptic cell membrane. It is found in the basolateral cell membrane. The protein localises to the endoplasmic reticulum membrane. The muscarinic acetylcholine receptor mediates various cellular responses, including inhibition of adenylate cyclase, breakdown of phosphoinositides and modulation of potassium channels through the action of G proteins. Primary transducing effect is Pi turnover. This is Muscarinic acetylcholine receptor M3 (Chrm3) from Mus musculus (Mouse).